We begin with the raw amino-acid sequence, 310 residues long: Olfactory receptor 8G3 (310 aa).

The Extracellular portion of the chain corresponds to 1–25; it reads MDPGNHSSVTESILAGLSEQPELQL. Residue asparagine 5 is glycosylated (N-linked (GlcNAc...) asparagine). A helical membrane pass occupies residues 26 to 46; the sequence is RLFLLFLGICVVTVVGNLGMI. Over 47 to 54 the chain is Cytoplasmic; it reads TLIGLSSH. The chain crosses the membrane as a helical span at residues 55-75; the sequence is LHTPMYYFLSSLSFIDFCHST. At 76–99 the chain is on the extracellular side; that stretch reads VITPKMLVNFATEKNIISYPECMA. Cysteine 97 and cysteine 189 are oxidised to a cystine. The chain crosses the membrane as a helical span at residues 100 to 120; sequence QLYLFSIFAIAECHMLAAMAY. Topologically, residues 121 to 139 are cytoplasmic; it reads DCYVAICSPLLYNVIMSYH. Residues 140-160 traverse the membrane as a helical segment; the sequence is HCFWLTVGVYILGILGSTIHT. The Extracellular portion of the chain corresponds to 161-197; it reads SFMLRLFLCKTNVINHYFCDLFPLLGLSCSSTYINEL. The chain crosses the membrane as a helical span at residues 198–217; it reads LVLVLSAFNILMPALTILAS. The Cytoplasmic portion of the chain corresponds to 218–237; the sequence is YIFIIASILRIHSTEGRSKA. Residues 238-258 traverse the membrane as a helical segment; it reads FSTCSSHILAVAVFFGSAAFM. Over 259–271 the chain is Extracellular; sequence YLQPSSVSSMDQR. Residues 272–292 form a helical membrane-spanning segment; it reads KVSSVFYTTIVPMLNPLIYSL. At 293 to 310 the chain is on the cytoplasmic side; that stretch reads RNKDVKLAVKKILHQTAC.

The protein belongs to the G-protein coupled receptor 1 family.

Its subcellular location is the cell membrane. Functionally, odorant receptor. The polypeptide is Olfactory receptor 8G3 (Homo sapiens (Human)).